The primary structure comprises 232 residues: Lipoprotein-releasing system ATP-binding protein LolD 2 (232 aa).

The ABC transporter domain maps to 11-231; sequence VYLHDIKRQY…SLQDGVVVEL (221 aa). 47–54 lines the ATP pocket; it reads APSGSGKS.

This sequence belongs to the ABC transporter superfamily. Lipoprotein translocase (TC 3.A.1.125) family. As to quaternary structure, the complex is composed of two ATP-binding proteins (LolD) and two transmembrane proteins (LolC and LolE).

It localises to the cell inner membrane. Functionally, part of the ABC transporter complex LolCDE involved in the translocation of mature outer membrane-directed lipoproteins, from the inner membrane to the periplasmic chaperone, LolA. Responsible for the formation of the LolA-lipoprotein complex in an ATP-dependent manner. In Rhodopseudomonas palustris (strain ATCC BAA-98 / CGA009), this protein is Lipoprotein-releasing system ATP-binding protein LolD 2.